A 224-amino-acid polypeptide reads, in one-letter code: Cardosin-E (224 aa).

A Peptidase A1 domain is found at 1-221; the sequence is DSGSAIVALT…DYGNLLVGFA (221 aa). D35 is a catalytic residue. The cysteines at positions 125 and 129 are disulfide-linked. The active site involves D134.

The protein belongs to the peptidase A1 family. Heterodimer of a light chain and a heavy chain. An intermediate form is produced first, and undergoes proteolytic processing to remove the internal plant-specific insert (PSI) and the propeptide. In terms of processing, N-glycosylated. Pistils.

Its subcellular location is the microsome membrane. It is found in the protein storage vacuole. The protein resides in the secreted. The protein localises to the cell wall. It localises to the extracellular space. Its subcellular location is the extracellular matrix. Its activity is regulated as follows. Inhibited by pepstatin. Aspartic protease with a high preference for bonds between hydrophobic residues. The polypeptide is Cardosin-E (Cynara cardunculus (Cardoon)).